The following is a 313-amino-acid chain: Ribosomal RNA small subunit methyltransferase H (313 aa).

Residues 35 to 37 (GGH), Asp55, Phe79, Asp101, and Gln108 each bind S-adenosyl-L-methionine.

Belongs to the methyltransferase superfamily. RsmH family.

It localises to the cytoplasm. It catalyses the reaction cytidine(1402) in 16S rRNA + S-adenosyl-L-methionine = N(4)-methylcytidine(1402) in 16S rRNA + S-adenosyl-L-homocysteine + H(+). Functionally, specifically methylates the N4 position of cytidine in position 1402 (C1402) of 16S rRNA. The sequence is that of Ribosomal RNA small subunit methyltransferase H from Shigella dysenteriae serotype 1 (strain Sd197).